The following is a 185-amino-acid chain: Peptidyl-tRNA hydrolase (185 aa).

Phe12 contacts tRNA. His17 functions as the Proton acceptor in the catalytic mechanism. TRNA is bound by residues Tyr61, Asn63, and Asn109.

Belongs to the PTH family. As to quaternary structure, monomer.

It localises to the cytoplasm. The enzyme catalyses an N-acyl-L-alpha-aminoacyl-tRNA + H2O = an N-acyl-L-amino acid + a tRNA + H(+). Hydrolyzes ribosome-free peptidyl-tRNAs (with 1 or more amino acids incorporated), which drop off the ribosome during protein synthesis, or as a result of ribosome stalling. In terms of biological role, catalyzes the release of premature peptidyl moieties from peptidyl-tRNA molecules trapped in stalled 50S ribosomal subunits, and thus maintains levels of free tRNAs and 50S ribosomes. The sequence is that of Peptidyl-tRNA hydrolase from Borrelia garinii subsp. bavariensis (strain ATCC BAA-2496 / DSM 23469 / PBi) (Borreliella bavariensis).